The following is a 400-amino-acid chain: Na(+)/H(+) antiporter NhaA (400 aa).

The next 11 helical transmembrane spans lie at 9–29 (FLVS…IAMV), 60–80 (LILW…GLEL), 96–116 (VLPA…FYLF), 127–147 (WAIP…ILGA), 155–175 (IFLV…MAIF), 180–200 (LSLI…ALNL), 210–230 (LILG…ATLA), 263–283 (YFVL…GIGL), 294–314 (VILG…FVAI), 327–347 (WISF…SLFI), and 366–386 (VLIA…IASV).

It belongs to the NhaA Na(+)/H(+) (TC 2.A.33) antiporter family.

It is found in the cell inner membrane. The enzyme catalyses Na(+)(in) + 2 H(+)(out) = Na(+)(out) + 2 H(+)(in). Na(+)/H(+) antiporter that extrudes sodium in exchange for external protons. The chain is Na(+)/H(+) antiporter NhaA from Campylobacter curvus (strain 525.92).